The sequence spans 227 residues: Peroxiredoxin 1 (227 aa).

The Thioredoxin domain occupies 6-161; it reads PLIGEKFPEM…ILRLIKSLQM (156 aa). Cys48 functions as the Cysteine sulfenic acid (-SOH) intermediate in the catalytic mechanism. Arg124 contributes to the substrate binding site.

Belongs to the peroxiredoxin family. Prx6 subfamily. Homodecamer. Pentamer of dimers that assemble into a ring structure.

The protein localises to the cytoplasm. The enzyme catalyses a hydroperoxide + [thioredoxin]-dithiol = an alcohol + [thioredoxin]-disulfide + H2O. Its function is as follows. Thiol-specific peroxidase that catalyzes the reduction of hydrogen peroxide and organic hydroperoxides to water and alcohols, respectively. Plays a role in cell protection against oxidative stress by detoxifying peroxides. The protein is Peroxiredoxin 1 of Picrophilus torridus (strain ATCC 700027 / DSM 9790 / JCM 10055 / NBRC 100828 / KAW 2/3).